A 384-amino-acid chain; its full sequence is MVIKLKNKKNDYSKLERKLYMYIVAIVVVAIVFVLYIRSMIRGKLGDWILSILENKYDLNHLDAMKLYQYSIRNNIDIFIYVAIVISILILCRVMLSKFAKYFDEINTGIDVLIQNEDKQIELSAEMDVMEQKLNTLKRTLEKREQDAKLAEQRKNDVVMYLAHDIKTPLTSIIGYLSLLDEAPDMPVDQKAKYVHITLDKAYRLEQLIDEFFEITRYNLQTITLTKTHIDLYYMLVQMTDEFYPQLSAHGKQAVIHAPEDLTVSGDPDKLARVFNNILKNAAAYSEDNSIIDITAGLSGDVVSIEFKNTGSIPKDKLAAIFEKFYRLDNARSSDTGGAGLGLAIAKEIIVQHGGQIYAESNDNYTTFRVELPAMPDLVDKRRS.

A run of 2 helical transmembrane segments spans residues 21-41 (MYIVAIVVVAIVFVLYIRSMI) and 76-96 (IDIFIYVAIVISILILCRVML). The Histidine kinase domain occupies 161-376 (YLAHDIKTPL…TFRVELPAMP (216 aa)). A Phosphohistidine; by autocatalysis modification is found at H164. An involved in low-affinity ATP-binding. Exhibits higher affinity for ATP than GTP region spans residues 221 to 384 (QTITLTKTHI…MPDLVDKRRS (164 aa)).

Post-translationally, autophosphorylated.

Its subcellular location is the membrane. It carries out the reaction ATP + protein L-histidine = ADP + protein N-phospho-L-histidine.. Phosphorylation of VanR inhibited by EDTA. Its function is as follows. Member of the two-component regulatory system VanS/VanR. Functions as a sensor protein kinase which is autophosphorylated at a histidine residue in response to environmental stimuli, such as glycopeptide antibiotics. VanS transfers its phosphate group to transcriptional regulatory protein VanR, thereby modulating expression of target genes. Binds directly to, and autophosphorylation activity is enhanced by, the glycopeptides vancomycin and teicoplanin, in vitro. However it has also been reported that autophosphorylation, phosphate transfer to VanR and dephosphorylation of phospho-VanR are all unaffected by the presence of vancomycin, in vitro. In the absence of vancomycin, negatively regulates VanR-mediated activation of vanS, vanH, vanA and vanX, probably as a result of dephosphorylating phospho-VanR. May inhibit promoter-specific DNA binding by VanR. Involved in conferring vancomycin resistance. The polypeptide is Sensor protein VanS (Enterococcus faecium (Streptococcus faecium)).